The following is a 131-amino-acid chain: MDVTRLLLATLVGFLCFFTVHSHLALEETLGDDRSLRSNSSMNSLDFSSVSIVALNKKSKKISRKEAEKRKRSSKKKASMKKVARPPPPSPCVATRDSCKPPAPACCDPCASCQCRFFGSACTCRVLNPNC.

Residues 1–22 form the signal peptide; that stretch reads MDVTRLLLATLVGFLCFFTVHS. An N-linked (GlcNAc...) asparagine glycan is attached at N39. The interval 58–100 is disordered; the sequence is KSKKISRKEAEKRKRSSKKKASMKKVARPPPPSPCVATRDSCK. The segment covering 70–84 has biased composition (basic residues); that stretch reads RKRSSKKKASMKKVA. Intrachain disulfides connect C92/C107, C99/C113, C106/C124, C110/C131, and C115/C122. The 40-residue stretch at 92–131 folds into the Agouti domain; the sequence is CVATRDSCKPPAPACCDPCASCQCRFFGSACTCRVLNPNC.

As to expression, epithelial cells of the hair follicles and the epidermis.

The protein resides in the secreted. In terms of biological role, involved in the regulation of melanogenesis. The binding of ASP to MC1R precludes alpha-MSH initiated signaling and thus blocks production of cAMP, leading to a down-regulation of eumelanogenesis (brown/black pigment) and thus increasing synthesis of pheomelanin (yellow/red pigment). Causes hair follicle melanocytes to synthesize phaeomelanin instead of black or brown pigment eumelanin and produces hairs with a subapical yellow band on an otherwise black or brown background when expressed during the mid-portion of hair growth. This Mus musculus (Mouse) protein is Agouti-signaling protein (Asip).